A 372-amino-acid chain; its full sequence is tRNA-specific 2-thiouridylase MnmA (372 aa).

ATP-binding positions include 16-23 (GMSGGVDS) and M42. An interaction with target base in tRNA region spans residues 102 to 104 (NPD). Catalysis depends on C107, which acts as the Nucleophile. C107 and C205 are joined by a disulfide. G132 is an ATP binding site. The interval 155–157 (KDQ) is interaction with tRNA. C205 (cysteine persulfide intermediate) is an active-site residue. Positions 317–318 (RY) are interaction with tRNA.

Belongs to the MnmA/TRMU family.

Its subcellular location is the cytoplasm. It carries out the reaction S-sulfanyl-L-cysteinyl-[protein] + uridine(34) in tRNA + AH2 + ATP = 2-thiouridine(34) in tRNA + L-cysteinyl-[protein] + A + AMP + diphosphate + H(+). Its function is as follows. Catalyzes the 2-thiolation of uridine at the wobble position (U34) of tRNA, leading to the formation of s(2)U34. The polypeptide is tRNA-specific 2-thiouridylase MnmA (Shewanella sp. (strain ANA-3)).